A 336-amino-acid polypeptide reads, in one-letter code: MPPPAPGARLRLLAAAALAGLAVISRGLLSQSLEFNSPADNYTVCEGDNATLSCFIDEHVTRVAWLNRSNILYAGNDRWTSDPRVRLLINTPEEFSILITEVGLGDEGLYTCSFQTRHQPYTTQVYLIVHVPARIVNISSPVTVNEGGNVNLLCLAVGRPEPTVTWRQLRDGFTSEGEILEISDIQRGQAGEYECVTHNGVNSAPDSRRVLVTVNYPPTITDVTSARTALGRAALLRCEAMAVPPADFQWYKDDRLLSSGTAEGLKVQTERTRSMLLFANVSARHYGNYTCRAANRLGASSASMRLLRPGSLENSAPRPPGLLALLSALGWLWWRM.

The N-terminal stretch at Met-1 to Ser-30 is a signal peptide. 3 Ig-like C2-type domains span residues Leu-33 to Thr-122, Pro-132 to Pro-217, and Pro-218 to Leu-307. N-linked (GlcNAc...) asparagine glycosylation is found at Asn-41, Asn-49, Asn-67, and Asn-137. Cys-54 and Cys-112 are oxidised to a cystine. 2 disulfide bridges follow: Cys-154-Cys-195 and Cys-238-Cys-291. An N-linked (GlcNAc...) asparagine glycan is attached at Asn-288.

It belongs to the immunoglobulin superfamily. IgLON family.

It localises to the secreted. The polypeptide is IgLON family member 5 (IGLON5) (Homo sapiens (Human)).